A 139-amino-acid polypeptide reads, in one-letter code: Protein shisa-5 (139 aa).

A helical membrane pass occupies residues 3 to 23 (FGTLVAIGVIVFAVVVITIIL).

This sequence belongs to the shisa family.

It is found in the endoplasmic reticulum membrane. The protein resides in the nucleus membrane. Functionally, can induce apoptosis in a caspase-dependent manner and plays a role in p53/TP53-dependent apoptosis. This is Protein shisa-5 (Shisa5) from Gallus gallus (Chicken).